The primary structure comprises 381 residues: EPS I polysaccharide export outer membrane protein EpsA (381 aa).

An N-terminal signal peptide occupies residues 1 to 23; the sequence is MFVSIPNIRKAVVSLSVVPLLAA. The N-palmitoyl cysteine moiety is linked to residue Cys24. Cys24 carries the S-diacylglycerol cysteine lipid modification.

This sequence belongs to the BexD/CtrA/VexA family.

The protein resides in the cell outer membrane. Probably involved in polymerization and/or export of exopolysaccharide EPS I which functions as a virulence factor. This is EPS I polysaccharide export outer membrane protein EpsA (epsA) from Ralstonia nicotianae (strain ATCC BAA-1114 / GMI1000) (Ralstonia solanacearum).